Reading from the N-terminus, the 271-residue chain is Proteasome inhibitor PI31 subunit (271 aa).

At alanine 2 the chain carries N-acetylalanine. The important for homodimerization and interaction with FBXO7 stretch occupies residues 2–150 (AGLEVLFASA…PIHEQWEKAR (149 aa)). 2 positions are modified to phosphoserine: serine 153 and serine 189. An Omega-N-methylarginine modification is found at arginine 205. Arginine 219 is modified (asymmetric dimethylarginine). Residues 226–271 (SGLPNRLPPGAVPPGARFDPFGPIGTSPSGPNPDHLPPPGYDDMYL) are disordered. Arginine 231 is subject to Omega-N-methylarginine. Residue serine 252 is modified to Phosphoserine. Residues 255 to 265 (GPNPDHLPPPG) show a composition bias toward pro residues.

This sequence belongs to the proteasome inhibitor PI31 family. Monomer and homodimer. Interacts with FBXO7.

The protein localises to the cytoplasm. It is found in the endoplasmic reticulum. Its function is as follows. Plays an important role in control of proteasome function. Inhibits the hydrolysis of protein and peptide substrates by the 20S proteasome. Also inhibits the activation of the proteasome by the proteasome regulatory proteins PA700 and PA28. This is Proteasome inhibitor PI31 subunit (Psmf1) from Mus musculus (Mouse).